The chain runs to 693 residues: Periplasmic alpha-galactoside-binding protein (693 aa).

Residues 1–20 form the signal peptide; it reads MKTHRLNMTASLLIGISAFA.

It belongs to the bacterial solute-binding protein 5 family.

The protein localises to the periplasm. Its function is as follows. Involved in the transport of alpha-galactosides. Required for the utilization of raffinose and melibiose. Probably acts as a periplasmic substrate-binding protein for a transport system. This chain is Periplasmic alpha-galactoside-binding protein, found in Rhizobium meliloti (strain 1021) (Ensifer meliloti).